Here is a 448-residue protein sequence, read N- to C-terminus: Probable glycine dehydrogenase (decarboxylating) subunit 1 (448 aa).

This sequence belongs to the GcvP family. N-terminal subunit subfamily. In terms of assembly, the glycine cleavage system is composed of four proteins: P, T, L and H. In this organism, the P 'protein' is a heterodimer of two subunits.

The catalysed reaction is N(6)-[(R)-lipoyl]-L-lysyl-[glycine-cleavage complex H protein] + glycine + H(+) = N(6)-[(R)-S(8)-aminomethyldihydrolipoyl]-L-lysyl-[glycine-cleavage complex H protein] + CO2. The glycine cleavage system catalyzes the degradation of glycine. The P protein binds the alpha-amino group of glycine through its pyridoxal phosphate cofactor; CO(2) is released and the remaining methylamine moiety is then transferred to the lipoamide cofactor of the H protein. The protein is Probable glycine dehydrogenase (decarboxylating) subunit 1 of Staphylococcus aureus (strain USA300).